Consider the following 340-residue polypeptide: DNA-directed RNA polymerase subunit alpha (340 aa).

The segment at Met-1 to Glu-233 is alpha N-terminal domain (alpha-NTD). The alpha C-terminal domain (alpha-CTD) stretch occupies residues Ala-268–His-340.

It belongs to the RNA polymerase alpha chain family. As to quaternary structure, in plastids the minimal PEP RNA polymerase catalytic core is composed of four subunits: alpha, beta, beta', and beta''. When a (nuclear-encoded) sigma factor is associated with the core the holoenzyme is formed, which can initiate transcription.

The protein resides in the plastid. Its subcellular location is the chloroplast. It carries out the reaction RNA(n) + a ribonucleoside 5'-triphosphate = RNA(n+1) + diphosphate. DNA-dependent RNA polymerase catalyzes the transcription of DNA into RNA using the four ribonucleoside triphosphates as substrates. The sequence is that of DNA-directed RNA polymerase subunit alpha from Cycas taitungensis (Prince sago).